A 344-amino-acid chain; its full sequence is Short chain dehydrogenase/reductase mfmJ (344 aa).

NADP(+) contacts are provided by L51, K76, D99, N126, Y213, and K217. The Proton donor role is filled by Y213. K217 (lowers pKa of active site Tyr) is an active-site residue.

Belongs to the short-chain dehydrogenases/reductases (SDR) family.

Functionally, short chain dehydrogenase/reductase; part of the gene cluster that mediates the biosynthesis of the phthalide-terpenoid hybrid 11'-O-desmethylfendlerol. MfmJ seems not to be involved directly in the biosynthesis of 11'-O-desmethylfendlerol and its role has still to be determined. The biosynthesis of 11'-O-desmethylfendlerol begins with the NR-PKS mfmB that forms 3,5-dimethylorsellinic acid (DMOA), which is then transformed into the phthalide 5,7-dihydroxy-4-(hydroxymethyl)-6-methylphthalide by the cytochrome P450 monooxygenase mfmA and the hydrolase mfmC. Subsequently, the methyltransferase mfmE catalyzes 7-O-methylation to yield 5-hydroxy-4-(hydroxymethyl)-7-methoxy-6-methylphthalide, which undergoes C-3 hydroxylation by the cytochrome P450 monooxygenase mfmF. The resultant cyclopolic acid (2,5-dihydroxy-4-(hydroxymethyl)-7-methoxy-6-methylphthalide) is then farnesylated by the DMATS-type prenyltransferase mfmD to afford 5-O-farnesylcyclopolic acid. Finally, the Pyr4-family terpene cyclase mfmH cyclizes the farnesyl moiety of 5-O-farnesylcyclopolic acid into a drimane-like structure, thus completing the biosynthesis of 11'-O-desmethylfendlerol. This chain is Short chain dehydrogenase/reductase mfmJ, found in Annulohypoxylon moriforme (Filamentous fungus).